We begin with the raw amino-acid sequence, 199 residues long: Recombination protein RecR (199 aa).

Residues 57-72 form a C4-type zinc finger; the sequence is CSICFNLTDTDPCAIC. Residues 80–175 form the Toprim domain; it reads RLLMVVEEAK…KVTRIAHGLP (96 aa).

The protein belongs to the RecR family.

In terms of biological role, may play a role in DNA repair. It seems to be involved in an RecBC-independent recombinational process of DNA repair. It may act with RecF and RecO. This Carboxydothermus hydrogenoformans (strain ATCC BAA-161 / DSM 6008 / Z-2901) protein is Recombination protein RecR.